Here is a 624-residue protein sequence, read N- to C-terminus: DNA mismatch repair protein MutL (624 aa).

The protein belongs to the DNA mismatch repair MutL/HexB family.

Functionally, this protein is involved in the repair of mismatches in DNA. It is required for dam-dependent methyl-directed DNA mismatch repair. May act as a 'molecular matchmaker', a protein that promotes the formation of a stable complex between two or more DNA-binding proteins in an ATP-dependent manner without itself being part of a final effector complex. This chain is DNA mismatch repair protein MutL, found in Xanthomonas campestris pv. campestris (strain B100).